Reading from the N-terminus, the 510-residue chain is GMP synthase [glutamine-hydrolyzing] (510 aa).

The 191-residue stretch at 5-195 (LVLVVDFGGQ…LFNVCNLKGD (191 aa)) folds into the Glutamine amidotransferase type-1 domain. The Nucleophile role is filled by cysteine 82. Active-site residues include histidine 169 and glutamate 171. Residues 196 to 385 (WSMSSFAEQQ…LGIPHKLVWR (190 aa)) enclose the GMPS ATP-PPase domain. ATP is bound at residue 223–229 (SGGVDSS).

Homodimer.

It catalyses the reaction XMP + L-glutamine + ATP + H2O = GMP + L-glutamate + AMP + diphosphate + 2 H(+). The protein operates within purine metabolism; GMP biosynthesis; GMP from XMP (L-Gln route): step 1/1. In terms of biological role, catalyzes the synthesis of GMP from XMP. The protein is GMP synthase [glutamine-hydrolyzing] of Clostridium botulinum (strain Okra / Type B1).